The sequence spans 241 residues: 2-C-methyl-D-erythritol 4-phosphate cytidylyltransferase (241 aa).

It belongs to the IspD/TarI cytidylyltransferase family. IspD subfamily. As to quaternary structure, homodimer.

The catalysed reaction is 2-C-methyl-D-erythritol 4-phosphate + CTP + H(+) = 4-CDP-2-C-methyl-D-erythritol + diphosphate. Its pathway is isoprenoid biosynthesis; isopentenyl diphosphate biosynthesis via DXP pathway; isopentenyl diphosphate from 1-deoxy-D-xylulose 5-phosphate: step 2/6. In terms of biological role, catalyzes the formation of 4-diphosphocytidyl-2-C-methyl-D-erythritol from CTP and 2-C-methyl-D-erythritol 4-phosphate (MEP). The chain is 2-C-methyl-D-erythritol 4-phosphate cytidylyltransferase from Yersinia pseudotuberculosis serotype I (strain IP32953).